The primary structure comprises 397 residues: Cysteine protease ATG4A (397 aa).

Cys79 (nucleophile) is an active-site residue. Catalysis depends on residues Asp279 and His281. Positions 392–395 (FEIL) match the LIR motif.

It belongs to the peptidase C54 family.

The protein localises to the cytoplasm. The catalysed reaction is [protein]-C-terminal L-amino acid-glycyl-phosphatidylethanolamide + H2O = [protein]-C-terminal L-amino acid-glycine + a 1,2-diacyl-sn-glycero-3-phosphoethanolamine. Functionally, cysteine protease that plays a key role in autophagy by mediating both proteolytic activation and delipidation of ATG8 family proteins. The protease activity is required for proteolytic activation of ATG8 family proteins: cleaves the C-terminal amino acid of ATG8 proteins to reveal a C-terminal glycine. Exposure of the glycine at the C-terminus is essential for ATG8 proteins conjugation to phosphatidylethanolamine (PE) and insertion to membranes, which is necessary for autophagy. Protease activity is also required to counteract formation of high-molecular weight conjugates of ATG8 proteins (ATG8ylation): acts as a deubiquitinating-like enzyme that removes ATG8 conjugated to other proteins, such as ATG3. In addition to the protease activity, also mediates delipidation of ATG8 family proteins. Catalyzes delipidation of PE-conjugated forms of ATG8 proteins during macroautophagy. This is Cysteine protease ATG4A from Xenopus laevis (African clawed frog).